Consider the following 561-residue polypeptide: Potassium-transporting ATPase potassium-binding subunit (561 aa).

12 consecutive transmembrane segments (helical) span residues Met-1 to Arg-21, Tyr-62 to Met-82, Gly-132 to Met-152, Ile-173 to Gly-193, Phe-253 to Val-273, Leu-283 to Val-303, Phe-327 to Val-347, Ala-356 to Val-376, Gly-379 to Gly-399, Met-416 to Met-436, Met-483 to Ile-503, and Leu-526 to Ala-546.

It belongs to the KdpA family. In terms of assembly, the system is composed of three essential subunits: KdpA, KdpB and KdpC.

The protein localises to the cell inner membrane. In terms of biological role, part of the high-affinity ATP-driven potassium transport (or Kdp) system, which catalyzes the hydrolysis of ATP coupled with the electrogenic transport of potassium into the cytoplasm. This subunit binds the periplasmic potassium ions and delivers the ions to the membrane domain of KdpB through an intramembrane tunnel. This Erwinia tasmaniensis (strain DSM 17950 / CFBP 7177 / CIP 109463 / NCPPB 4357 / Et1/99) protein is Potassium-transporting ATPase potassium-binding subunit.